Reading from the N-terminus, the 260-residue chain is MPVHLLIVDALNLIRRIHAVQGSPCITACQHALHQLIQNSQPTHAVAVFDDEDRDTSWRHQLLPDYKAGRTPMPDNLKQELPQIKTAFAAVGVESWHSPGNEADDLAATLATKLSSAGHQATIISTDKGYCQLLAPHIQIRDYFQKRWLDLPFIEQEFSVSPQQLTDYWGLAGISSSKIPGVAGIGPKSAAQLLQQAGNLEALYQQLDAVPEKWRKKLEQHKEMALISRQVATLRTDLTLNGNLQQLRLPVQSSTQPQSY.

Asp-104 serves as a coordination point for Mg(2+). Positions 160–250 (VSPQQLTDYW…NGNLQQLRLP (91 aa)) constitute a 5'-3' exonuclease domain. Residues Leu-171, Ala-172, Pro-180, Val-182, and Ile-185 each contribute to the K(+) site. Residues 184–189 (GIGPKS) are interaction with DNA.

This sequence belongs to the Xni family. Mg(2+) is required as a cofactor. It depends on K(+) as a cofactor.

In terms of biological role, has flap endonuclease activity. During DNA replication, flap endonucleases cleave the 5'-overhanging flap structure that is generated by displacement synthesis when DNA polymerase encounters the 5'-end of a downstream Okazaki fragment. The sequence is that of Flap endonuclease Xni from Pectobacterium atrosepticum (strain SCRI 1043 / ATCC BAA-672) (Erwinia carotovora subsp. atroseptica).